The following is a 201-amino-acid chain: Pyrrolidone-carboxylate peptidase (201 aa).

Catalysis depends on residues glutamate 81, cysteine 143, and histidine 168.

This sequence belongs to the peptidase C15 family. In terms of assembly, homotetramer.

It is found in the cytoplasm. The enzyme catalyses Release of an N-terminal pyroglutamyl group from a polypeptide, the second amino acid generally not being Pro.. In terms of biological role, removes 5-oxoproline from various penultimate amino acid residues except L-proline. The chain is Pyrrolidone-carboxylate peptidase (pcp) from Halalkalibacterium halodurans (strain ATCC BAA-125 / DSM 18197 / FERM 7344 / JCM 9153 / C-125) (Bacillus halodurans).